The sequence spans 402 residues: Cysteine desulfurase NifS (402 aa).

Residues 72–73, Asn151, Gln179, and 199–201 contribute to the pyridoxal 5'-phosphate site; these read GT and CGH. Position 202 is an N6-(pyridoxal phosphate)lysine (Lys202). Thr237 is a pyridoxal 5'-phosphate binding site. The active-site Cysteine persulfide intermediate is the Cys325. Cys325 lines the [2Fe-2S] cluster pocket.

This sequence belongs to the class-V pyridoxal-phosphate-dependent aminotransferase family. NifS/IscS subfamily. In terms of assembly, homodimer. It depends on pyridoxal 5'-phosphate as a cofactor.

It carries out the reaction (sulfur carrier)-H + L-cysteine = (sulfur carrier)-SH + L-alanine. Inhibited by equimolar concentrations of p-chloromercuribenzoic acid, iodoacetamide or N-ethylmaleimide. Functionally, catalyzes the removal of elemental sulfur atoms from cysteine to produce alanine. Seems to participate in the biosynthesis of the nitrogenase metalloclusters by providing the inorganic sulfur required for the Fe-S core formation. The chain is Cysteine desulfurase NifS from Azotobacter vinelandii.